We begin with the raw amino-acid sequence, 164 residues long: MSVNMDELRHQVMINQFVLAAGCAADQAKQLLQAAHWQFETALSTFFQETNIPNSHHHHQMMCTPSNTPATPPNFPDALAMFSKLRASEGLQSSNSPMTAAACSPPANFSPFWASSPPSHQAPWIPPSSPTTFHHLHRPQPTWPPGAQQGGAQQKAMAAMDGQR.

Residue S2 is modified to N-acetylserine. The tract at residues 128 to 164 is disordered; it reads SSPTTFHHLHRPQPTWPPGAQQGGAQQKAMAAMDGQR. Over residues 146–164 the composition is skewed to low complexity; it reads GAQQGGAQQKAMAAMDGQR.

The protein belongs to the UBALD family.

This is UBA-like domain-containing protein 2 (UBALD2) from Homo sapiens (Human).